The sequence spans 239 residues: Short palate, lung and nasal epithelium carcinoma-associated protein 2A (239 aa).

A signal peptide spans Met1–Ser20. An intrachain disulfide couples Cys166 to Cys209.

Belongs to the BPI/LBP/Plunc superfamily. Plunc family. As to expression, detected in salivary tissues: parotid, submandibular and sublingual glands.

The protein resides in the secreted. This chain is Short palate, lung and nasal epithelium carcinoma-associated protein 2A (SPLUNC2A), found in Bos taurus (Bovine).